A 40-amino-acid polypeptide reads, in one-letter code: Photosystem II reaction center protein J (40 aa).

The helical transmembrane segment at 8 to 28 threads the bilayer; it reads IPLWLIGTVTGIAVIGLIGVF.

This sequence belongs to the PsbJ family. As to quaternary structure, PSII is composed of 1 copy each of membrane proteins PsbA, PsbB, PsbC, PsbD, PsbE, PsbF, PsbH, PsbI, PsbJ, PsbK, PsbL, PsbM, PsbT, PsbX, PsbY, PsbZ, Psb30/Ycf12, at least 3 peripheral proteins of the oxygen-evolving complex and a large number of cofactors. It forms dimeric complexes.

It is found in the plastid. It localises to the chloroplast thylakoid membrane. Functionally, one of the components of the core complex of photosystem II (PSII). PSII is a light-driven water:plastoquinone oxidoreductase that uses light energy to abstract electrons from H(2)O, generating O(2) and a proton gradient subsequently used for ATP formation. It consists of a core antenna complex that captures photons, and an electron transfer chain that converts photonic excitation into a charge separation. This chain is Photosystem II reaction center protein J, found in Oryza nivara (Indian wild rice).